The primary structure comprises 465 residues: GTPase Der (465 aa).

EngA-type G domains follow at residues 3–167 and 179–352; these read PLVA…PEEG and IRIA…ESAN. GTP is bound by residues 9 to 16, 57 to 61, 119 to 122, 185 to 192, 232 to 236, and 297 to 300; these read GRPNVGKS, DTGGI, NKID, DTAGL, and NKWD. Residues 353–437 form the KH-like domain; that stretch reads KTFTTSEVNK…PVSFIFREGT (85 aa).

It belongs to the TRAFAC class TrmE-Era-EngA-EngB-Septin-like GTPase superfamily. EngA (Der) GTPase family. In terms of assembly, associates with the 50S ribosomal subunit.

In terms of biological role, GTPase that plays an essential role in the late steps of ribosome biogenesis. This chain is GTPase Der, found in Stenotrophomonas maltophilia (strain R551-3).